Consider the following 573-residue polypeptide: Maestro heat-like repeat-containing protein family member 9 (573 aa).

HEAT repeat units lie at residues L118–T155, P252–E289, T292–K328, S357–L394, and Q418–C458.

The polypeptide is Maestro heat-like repeat-containing protein family member 9 (MROH9) (Homo sapiens (Human)).